Reading from the N-terminus, the 368-residue chain is Probable protein phosphatase 2C 58 (368 aa).

Residues lysine 23–phenylalanine 329 enclose the PPM-type phosphatase domain. Mn(2+) contacts are provided by aspartate 57, glycine 58, aspartate 272, and aspartate 320. The tract at residues asparagine 336 to serine 368 is disordered. Residues histidine 356–serine 368 show a composition bias toward basic and acidic residues.

It belongs to the PP2C family. Requires Mg(2+) as cofactor. It depends on Mn(2+) as a cofactor.

It catalyses the reaction O-phospho-L-seryl-[protein] + H2O = L-seryl-[protein] + phosphate. The catalysed reaction is O-phospho-L-threonyl-[protein] + H2O = L-threonyl-[protein] + phosphate. The polypeptide is Probable protein phosphatase 2C 58 (Oryza sativa subsp. japonica (Rice)).